The sequence spans 357 residues: UPF0283 membrane protein BMEI0952 (357 aa).

A disordered region spans residues 1 to 36 (MSDKTPRKPTAFRLEQPARVSAASEQEEPRRPRAVK). Over residues 27-36 (EEPRRPRAVK) the composition is skewed to basic and acidic residues. A run of 2 helical transmembrane segments spans residues 78–98 (ILFGALGILVSFAIGIWTEDL) and 109–129 (LGWTALGVAMVALAAFAAIIL).

It belongs to the UPF0283 family.

The protein resides in the cell inner membrane. The chain is UPF0283 membrane protein BMEI0952 from Brucella melitensis biotype 1 (strain ATCC 23456 / CCUG 17765 / NCTC 10094 / 16M).